Consider the following 173-residue polypeptide: MQERINNCVTQVLAESAGTRGEGAYLIDIKVKGKGSGRKIEILMDADDGIRIHQCAYISRRVRERIEGDDDLLELVGENFDLMVSSPGLGEPIIIPRQYIRHVGKLLQVTYADSNGDPVELVGHLQEVSLLDEHGAKIVIMPEQKKKKGQQPKTEAVILYLNQVIRAIPEAEL.

It belongs to the RimP family.

The protein localises to the cytoplasm. Its function is as follows. Required for maturation of 30S ribosomal subunits. In Pelodictyon phaeoclathratiforme (strain DSM 5477 / BU-1), this protein is Ribosome maturation factor RimP.